A 286-amino-acid polypeptide reads, in one-letter code: tRNA dimethylallyltransferase (286 aa).

The segment at 18-21 (DSMQ) is interaction with substrate tRNA.

It belongs to the IPP transferase family. Monomer. Requires Mg(2+) as cofactor.

It catalyses the reaction adenosine(37) in tRNA + dimethylallyl diphosphate = N(6)-dimethylallyladenosine(37) in tRNA + diphosphate. Functionally, catalyzes the transfer of a dimethylallyl group onto the adenine at position 37 in tRNAs that read codons beginning with uridine, leading to the formation of N6-(dimethylallyl)adenosine (i(6)A). The polypeptide is tRNA dimethylallyltransferase (Tropheryma whipplei (strain TW08/27) (Whipple's bacillus)).